We begin with the raw amino-acid sequence, 163 residues long: Nucleotide-binding protein KPK_4305 (163 aa).

This sequence belongs to the YajQ family.

Its function is as follows. Nucleotide-binding protein. In Klebsiella pneumoniae (strain 342), this protein is Nucleotide-binding protein KPK_4305.